Consider the following 204-residue polypeptide: Cobalt-containing nitrile hydratase subunit alpha (204 aa).

Residues cysteine 108, cysteine 111, serine 112, and cysteine 113 each coordinate Co(2+). The residue at position 111 (cysteine 111) is a Cysteine sulfinic acid (-SO2H). Position 113 is a cysteine sulfenic acid (-SOH) (cysteine 113).

It belongs to the nitrile hydratase subunit alpha family. As to quaternary structure, heterotetramer of two alpha and two beta chains. Requires Co(2+) as cofactor.

It catalyses the reaction an aliphatic primary amide = an aliphatic nitrile + H2O. Functionally, NHase catalyzes the hydration of various nitrile compounds to the corresponding amides. This Pseudonocardia thermophila protein is Cobalt-containing nitrile hydratase subunit alpha.